Consider the following 512-residue polypeptide: Maturase K (512 aa).

Belongs to the intron maturase 2 family. MatK subfamily.

It is found in the plastid. The protein localises to the chloroplast. In terms of biological role, usually encoded in the trnK tRNA gene intron. Probably assists in splicing its own and other chloroplast group II introns. In Acer campestre (Field maple), this protein is Maturase K.